Consider the following 458-residue polypeptide: Tyrosine phenol-lyase (458 aa).

Lys-258 is modified (N6-(pyridoxal phosphate)lysine).

This sequence belongs to the beta-eliminating lyase family. As to quaternary structure, homotetramer. It depends on pyridoxal 5'-phosphate as a cofactor.

The catalysed reaction is L-tyrosine + H2O = phenol + pyruvate + NH4(+). The protein is Tyrosine phenol-lyase (tpl) of Pasteurella multocida (strain Pm70).